Consider the following 544-residue polypeptide: Lysophosphatidylcholine acyltransferase 2 (544 aa).

Residues 1 to 57 are Cytoplasmic-facing; sequence MSRCAQAAEVAATVPGAGVGNVGLRPPMVPRQASFFPPPVPNPFVQQTQIGSARRVQ. A helical; Signal-anchor for type II membrane protein transmembrane segment spans residues 58-78; the sequence is IVLLGIILLPIRVLLVALILL. Topologically, residues 79 to 544 are lumenal; that stretch reads LAWPFAAIST…EESTSDKKDD (466 aa). The short motif at 146-151 is the HXXXXD motif element; the sequence is HSTFFD. The EGTC motif signature appears at 220 to 223; that stretch reads EGTC. EF-hand domains lie at 391–426 and 428–463; these read PVSD…LCNP and NTEE…SLGV. Ca(2+) is bound by residues D404, N406, D408, S410, E415, D441, D443, D445, Y447, and E452. Residues 518 to 529 are compositionally biased toward polar residues; that stretch reads VQTTPSTASNKV. The disordered stretch occupies residues 518-544; it reads VQTTPSTASNKVSPEKHEESTSDKKDD. Residues 530–544 are compositionally biased toward basic and acidic residues; that stretch reads SPEKHEESTSDKKDD.

The protein belongs to the 1-acyl-sn-glycerol-3-phosphate acyltransferase family.

The protein localises to the endoplasmic reticulum membrane. It is found in the golgi apparatus membrane. Its subcellular location is the cell membrane. It localises to the lipid droplet. It carries out the reaction a 1-acyl-sn-glycero-3-phosphocholine + an acyl-CoA = a 1,2-diacyl-sn-glycero-3-phosphocholine + CoA. The catalysed reaction is a 1-O-alkyl-sn-glycero-3-phosphocholine + acetyl-CoA = a 1-O-alkyl-2-acetyl-sn-glycero-3-phosphocholine + CoA. The enzyme catalyses a 1-acyl-sn-glycero-3-phosphate + an acyl-CoA = a 1,2-diacyl-sn-glycero-3-phosphate + CoA. It catalyses the reaction a 1-O-(1Z-alkenyl)-sn-glycero-3-phosphocholine + an acyl-CoA = a 1-O-(1Z-alkenyl)-2-acyl-sn-glycero-3-phosphocholine + CoA. It carries out the reaction 1-hexadecanoyl-sn-glycero-3-phosphate + (9Z)-octadecenoyl-CoA = 1-hexadecanoyl-2-(9Z-octadecenoyl)-sn-glycero-3-phosphate + CoA. The catalysed reaction is 1-(9Z-octadecenoyl)-sn-glycero-3-phosphate + (9Z)-octadecenoyl-CoA = 1,2-di-(9Z-octadecenoyl)-sn-glycero-3-phosphate + CoA. The enzyme catalyses 1-(9Z-octadecenoyl)-sn-glycero-3-phosphate + hexadecanoyl-CoA = 1-(9Z)-octadecenoyl-2-hexadecanoyl-sn-glycero-3-phosphate + CoA. It catalyses the reaction 1-heptadecanoyl-sn-glycero-3-phosphate + (9Z)-octadecenoyl-CoA = 1-heptadecanoyl-2-(9Z)-octadecenoyl-sn-glycero-3-phosphate + CoA. It carries out the reaction 1-octadecanoyl-sn-glycero-3-phosphate + (9Z)-octadecenoyl-CoA = 1-octadecanoyl-2-(9Z-octadecenoyl)-sn-glycero-3-phosphate + CoA. The catalysed reaction is heptadecanoyl-CoA + 1-(9Z-octadecenoyl)-sn-glycero-3-phosphate = 1-(9Z)-octadecenoyl-2-heptadecanoyl-sn-glycero-3-phosphate + CoA. The enzyme catalyses 1-(9Z-octadecenoyl)-sn-glycero-3-phosphate + (9Z,12Z)-octadecadienoyl-CoA = 1-(9Z)-octadecenoyl-2-(9Z,12Z)-octadecadienoyl-sn-glycero-3-phosphate + CoA. It catalyses the reaction 1-(9Z-octadecenoyl)-sn-glycero-3-phosphate + tetradecanoyl-CoA = 1-(9Z)-octadecenoyl-2-tetradecanoyl-sn-glycero-3-phosphate + CoA. It carries out the reaction pentadecanoyl-CoA + 1-(9Z-octadecenoyl)-sn-glycero-3-phosphate = 1-(9Z)-octadecenoyl-2-pentadecanoyl-sn-glycero-3-phosphate + CoA. The catalysed reaction is nonadecanoyl-CoA + 1-(9Z-octadecenoyl)-sn-glycero-3-phosphate = 1-(9Z)-octadecenoyl-2-nonadecanoyl-sn-glycero-3-phosphate + CoA. The enzyme catalyses 1-hexadecanoyl-sn-glycero-3-phosphocholine + (9Z)-octadecenoyl-CoA = 1-hexadecanoyl-2-(9Z-octadecenoyl)-sn-glycero-3-phosphocholine + CoA. It catalyses the reaction 1-O-hexadecyl-sn-glycero-3-phosphocholine + acetyl-CoA = 1-O-hexadecyl-2-acetyl-sn-glycero-3-phosphocholine + CoA. It carries out the reaction 1-O-octadecyl-sn-glycero-3-phosphocholine + acetyl-CoA = 1-O-octadecyl-2-acetyl-sn-glycero-3-phosphocholine + CoA. The catalysed reaction is 1-hexadecanoyl-sn-glycero-3-phosphocholine + acetyl-CoA = 1-hexadecanoyl-2-acetyl-sn-glycero-3-phosphocholine + CoA. The enzyme catalyses 1-octadecanoyl-sn-glycero-3-phosphocholine + acetyl-CoA = 1-octadecanoyl-2-acetyl-sn-glycero-3-phosphocholine + CoA. It catalyses the reaction a 1-O-(1Z-alkenyl)-sn-glycero-3-phosphocholine + acetyl-CoA = 1-O-(1Z)-alkenyl-2-acetyl-sn-glycero-3-phosphocholine + CoA. It carries out the reaction 1-O-octadecyl-sn-glycero-3-phosphocholine + (5Z,8Z,11Z,14Z)-eicosatetraenoyl-CoA = 1-O-octadecyl-2-(5Z,8Z,11Z,14Z)-eicosatetraenoyl-sn-glycero-3-phosphocholine + CoA. It participates in lipid metabolism; phospholipid metabolism. In terms of biological role, exhibits both acyltransferase and acetyltransferase activities. Catalyzes the conversion of lysophosphatidylcholine (1-acyl-sn-glycero-3-phosphocholine or LPC) into phosphatidylcholine (1,2-diacyl-sn-glycero-3-phosphocholine or PC). Catalyzes the conversion 1-acyl-sn-glycerol-3-phosphate (lysophosphatidic acid or LPA) into 1,2-diacyl-sn-glycerol-3-phosphate (phosphatidic acid or PA) by incorporating an acyl moiety at the sn-2 position of the glycerol backbone. Involved in platelet-activating factor (PAF) biosynthesis by catalyzing the conversion of the PAF precursor, 1-O-alkyl-sn-glycero-3-phosphocholine (lyso-PAF) into 1-O-alkyl-2-acetyl-sn-glycero-3-phosphocholine (PAF). Also converts lyso-PAF to 1-O-alkyl-2-acyl-sn-glycero-3-phosphocholine (PC), a major component of cell membranes and a PAF precursor. Under resting conditions, acyltransferase activity is preferred. Upon acute inflammatory stimulus, acetyltransferase activity is enhanced and PAF synthesis increases. Involved in the regulation of lipid droplet number and size. In Homo sapiens (Human), this protein is Lysophosphatidylcholine acyltransferase 2 (LPCAT2).